Consider the following 788-residue polypeptide: Choline transporter-like protein 1 (788 aa).

A helical transmembrane segment spans residues 98–118 (FLFFVFLCGWVVVASLGIMWG). The N-linked (GlcNAc...) asparagine glycan is linked to N276. A run of 4 helical transmembrane segments spans residues 329–349 (WWQT…WTVI), 352–372 (LLGS…LGFG), 409–429 (FVVA…ILFI), and 458–478 (LFPF…AIWL). The N-linked (GlcNAc...) asparagine glycan is linked to N497. 5 consecutive transmembrane segments (helical) span residues 531 to 551 (LFAF…ALAG), 583 to 603 (LGSI…RVML), 620 to 640 (WFLM…KFLT), 679 to 699 (AGIL…ILSF), and 718 to 738 (YYFV…DLFF).

This sequence belongs to the CTL (choline transporter-like) family.

It is found in the membrane. This Caenorhabditis briggsae protein is Choline transporter-like protein 1 (chtl-1).